The following is a 516-amino-acid chain: GMP synthase [glutamine-hydrolyzing] (516 aa).

The Glutamine amidotransferase type-1 domain maps to 5 to 199; it reads SIIVLDFGSQ…ARNICGVTEK (195 aa). C82 serves as the catalytic Nucleophile. Catalysis depends on residues H173 and E175. The GMPS ATP-PPase domain maps to 200-391; sequence WKMEHFLKEQ…LGLPESMINR (192 aa). 227 to 233 contacts ATP; it reads SGGVDSS.

In terms of assembly, homodimer.

The catalysed reaction is XMP + L-glutamine + ATP + H2O = GMP + L-glutamate + AMP + diphosphate + 2 H(+). It functions in the pathway purine metabolism; GMP biosynthesis; GMP from XMP (L-Gln route): step 1/1. Functionally, catalyzes the synthesis of GMP from XMP. The polypeptide is GMP synthase [glutamine-hydrolyzing] (Sulfurimonas denitrificans (strain ATCC 33889 / DSM 1251) (Thiomicrospira denitrificans (strain ATCC 33889 / DSM 1251))).